The chain runs to 434 residues: Glutamate-1-semialdehyde 2,1-aminomutase 2 (434 aa).

K269 carries the N6-(pyridoxal phosphate)lysine modification.

The protein belongs to the class-III pyridoxal-phosphate-dependent aminotransferase family. HemL subfamily. In terms of assembly, homodimer. The cofactor is pyridoxal 5'-phosphate.

It is found in the cytoplasm. It catalyses the reaction (S)-4-amino-5-oxopentanoate = 5-aminolevulinate. It functions in the pathway porphyrin-containing compound metabolism; protoporphyrin-IX biosynthesis; 5-aminolevulinate from L-glutamyl-tRNA(Glu): step 2/2. This Exiguobacterium sp. (strain ATCC BAA-1283 / AT1b) protein is Glutamate-1-semialdehyde 2,1-aminomutase 2.